Here is a 72-residue protein sequence, read N- to C-terminus: Translation initiation factor IF-1 (72 aa).

Positions 1 to 72 (MAKKDVIELE…TRGRITWRKK (72 aa)) constitute an S1-like domain.

It belongs to the IF-1 family. In terms of assembly, component of the 30S ribosomal translation pre-initiation complex which assembles on the 30S ribosome in the order IF-2 and IF-3, IF-1 and N-formylmethionyl-tRNA(fMet); mRNA recruitment can occur at any time during PIC assembly.

It is found in the cytoplasm. Its function is as follows. One of the essential components for the initiation of protein synthesis. Stabilizes the binding of IF-2 and IF-3 on the 30S subunit to which N-formylmethionyl-tRNA(fMet) subsequently binds. Helps modulate mRNA selection, yielding the 30S pre-initiation complex (PIC). Upon addition of the 50S ribosomal subunit IF-1, IF-2 and IF-3 are released leaving the mature 70S translation initiation complex. This is Translation initiation factor IF-1 from Clostridioides difficile (strain 630) (Peptoclostridium difficile).